Reading from the N-terminus, the 126-residue chain is Methylglyoxal synthase (126 aa).

The 126-residue stretch at 1-126 (MAGSKCLALI…AIKLLPTLEA (126 aa)) folds into the MGS-like domain. Substrate contacts are provided by residues His-12, Lys-16, 38–41 (TGTT), and 59–60 (SG). The active-site Proton donor/acceptor is Asp-65. His-92 is a substrate binding site.

This sequence belongs to the methylglyoxal synthase family.

It carries out the reaction dihydroxyacetone phosphate = methylglyoxal + phosphate. Catalyzes the formation of methylglyoxal from dihydroxyacetone phosphate. In Rhizobium etli (strain ATCC 51251 / DSM 11541 / JCM 21823 / NBRC 15573 / CFN 42), this protein is Methylglyoxal synthase.